The primary structure comprises 366 residues: Ribosomal RNA large subunit methyltransferase M (366 aa).

Residues Ser-188, 221 to 224 (CPGG), Asp-240, Asp-260, and Asp-277 contribute to the S-adenosyl-L-methionine site. The active-site Proton acceptor is Lys-306.

Belongs to the class I-like SAM-binding methyltransferase superfamily. RNA methyltransferase RlmE family. RlmM subfamily. As to quaternary structure, monomer.

Its subcellular location is the cytoplasm. It catalyses the reaction cytidine(2498) in 23S rRNA + S-adenosyl-L-methionine = 2'-O-methylcytidine(2498) in 23S rRNA + S-adenosyl-L-homocysteine + H(+). Its function is as follows. Catalyzes the 2'-O-methylation at nucleotide C2498 in 23S rRNA. This chain is Ribosomal RNA large subunit methyltransferase M, found in Photorhabdus asymbiotica subsp. asymbiotica (strain ATCC 43949 / 3105-77) (Xenorhabdus luminescens (strain 2)).